We begin with the raw amino-acid sequence, 478 residues long: Early growth response protein 4 (478 aa).

The tract at residues 275–302 (TEGLPALLTPPGGEGGSGGEGGEFLAAP) is disordered. Gly residues predominate over residues 286-296 (GGEGGSGGEGG). C2H2-type zinc fingers lie at residues 372-396 (FACPVESCVRSFARSDELNRHLRIH), 402-424 (FQCRICLRNFSRSDHLTTHVRTH), and 430-452 (FACDVCGRRFARSDEKKRHSKVH).

This sequence belongs to the EGR C2H2-type zinc-finger protein family.

It localises to the nucleus. Its function is as follows. Transcriptional regulator. Recognizes and binds to the DNA sequence 5'-GCGGGGGCG-3' (GSG). Activates the transcription of target genes whose products are required for mitogenesis and differentiation. This is Early growth response protein 4 (Egr4) from Mus musculus (Mouse).